The chain runs to 553 residues: CDP-diacylglycerol--glycerol-3-phosphate 3-phosphatidyltransferase, mitochondrial (553 aa).

The transit peptide at 1-25 (MAAPAAGPVFWRRLLGLLPGRPGLA) directs the protein to the mitochondrion. Ser-46 carries the post-translational modification Phosphoserine. 121–128 (ASLYLGTG) is a binding site for ATP. 2 PLD phosphodiesterase domains span residues 212 to 238 (TIGL…SDSY) and 457 to 490 (RGWT…GYRS). Catalysis depends on residues His-217, Lys-219, and Asp-224.

The protein belongs to the CDP-alcohol phosphatidyltransferase class-II family. In terms of tissue distribution, widely expressed with higher expression in testis, liver and brain.

It is found in the mitochondrion. The catalysed reaction is a CDP-1,2-diacyl-sn-glycerol + sn-glycerol 3-phosphate = a 1,2-diacyl-sn-glycero-3-phospho-(1'-sn-glycero-3'-phosphate) + CMP + H(+). The protein operates within phospholipid metabolism; phosphatidylglycerol biosynthesis; phosphatidylglycerol from CDP-diacylglycerol: step 1/2. Its activity is regulated as follows. Activated by calcium and magnesium and inhibited by other bivalent cations. Its function is as follows. Functions in the biosynthesis of the anionic phospholipids phosphatidylglycerol and cardiolipin. The protein is CDP-diacylglycerol--glycerol-3-phosphate 3-phosphatidyltransferase, mitochondrial (Pgs1) of Mus musculus (Mouse).